A 351-amino-acid polypeptide reads, in one-letter code: Magnesium-protoporphyrin IX monomethyl ester [oxidative] cyclase 1 (351 aa).

Belongs to the AcsF family. Requires Fe cation as cofactor.

It catalyses the reaction Mg-protoporphyrin IX 13-monomethyl ester + 3 NADPH + 3 O2 + 2 H(+) = 3,8-divinyl protochlorophyllide a + 3 NADP(+) + 5 H2O. The protein operates within porphyrin-containing compound metabolism; chlorophyll biosynthesis (light-independent). Functionally, catalyzes the formation of the isocyclic ring in chlorophyll biosynthesis. Mediates the cyclase reaction, which results in the formation of divinylprotochlorophyllide (Pchlide) characteristic of all chlorophylls from magnesium-protoporphyrin IX 13-monomethyl ester (MgPMME). The protein is Magnesium-protoporphyrin IX monomethyl ester [oxidative] cyclase 1 of Nostoc sp. (strain PCC 7120 / SAG 25.82 / UTEX 2576).